The following is a 220-amino-acid chain: CRISPR system Cms endoribonuclease Csm3 (220 aa).

Belongs to the CRISPR-associated Csm3 family. Part of the Csm effector complex that includes at least Cas10(1), Csm2(3), Csm3(5), Csm4(1), Csm5(1) and mature crRNA. The Csm complex is elongated and slightly twisted with a maximal length of 215 Angstroms and a diameter of 75-80 Angstroms. It has been modeled to have a central protein filamant of Csm3 subunits along which the dsRNA helix of paired crRNA and target RNA binds. The filament is capped at one end by Cas10 and Csm4 and at the other end by Csm5; ssDNA is thought to bind to the N-terminal HD domain of Cas10. Csm with a precursor crRNA does not include Csm5, while Cas6, the enzyme probably involved in pre-crRNA processing, is found associated with a subset of the Csm complex. It depends on a metal cation as a cofactor.

With respect to regulation, target ssRNase is inhibited by EDTA. Its function is as follows. CRISPR (clustered regularly interspaced short palindromic repeat) is an adaptive immune system that provides protection against mobile genetic elements (viruses, transposable elements and conjugative plasmids). CRISPR clusters contain spacers, sequences complementary to antecedent mobile elements, and target invading nucleic acids. CRISPR clusters are transcribed and processed into CRISPR RNA (crRNA). The type III-A Csm effector complex binds crRNA and acts as a crRNA-guided RNase, DNase and cyclic oligoadenylate synthase; binding of target RNA cognate to the crRNA is required for all activities. In a heterologous host this Csm effector complex restricts ssRNA phage MS2, suggesting it may target RNA viruses in vivo. In terms of biological role, csm functions as a non-specific ssDNase. Base-pairing between crRNA and target RNA to form a ternary Csm complex activates a ssDNase activity; target RNA cleavage suppresses the ssDNase, a temporal control that prevents uncontrolled DNA degradation. Viral RNA transcripts probably tether the Csm complex to the viral genome, recruiting Cas10 ssDNA activity which is able to degrade DNA in the transcription bubble, spatially controlling the DNase activity. This subunit has the target ssRNA endonuclease activity; it cleaves multiple sites in the target RNA at 6 nucleotide intervals. The number of cleavage sites in the target RNA correlates with the number of Csm3 subunits in the Csm effector complex. In the Csm complex target RNA and ssDNA are cleaved simultaneously, although RNase activity (of Csm3) is much faster. RNA cleavage by Csm3 is not required for ssDNase activity as Csm complex with inactive Csm3 still has ssDNase activity; however as the cleaved target RNA products dissociate away ssDNase activity decreases. This Streptococcus thermophilus protein is CRISPR system Cms endoribonuclease Csm3.